We begin with the raw amino-acid sequence, 955 residues long: UPF0182 protein syc2310_c (955 aa).

Helical transmembrane passes span 12–32, 45–65, 85–105, 141–161, 163–183, 224–244, 263–283, 306–326, and 343–363; these read IAAI…TLWF, LAVQ…LIGG, LQLG…LALT, GSWP…LFLW, PWPL…LLTS, FDLW…YYLA, HLVR…WLAQ, LPLL…LFWQ, and AAIA…QLVV.

This sequence belongs to the UPF0182 family.

It localises to the cell membrane. This Synechococcus sp. (strain ATCC 27144 / PCC 6301 / SAUG 1402/1) (Anacystis nidulans) protein is UPF0182 protein syc2310_c.